The following is a 158-amino-acid chain: 6,7-dimethyl-8-ribityllumazine synthase (158 aa).

5-amino-6-(D-ribitylamino)uracil-binding positions include Phe-22, 57 to 59, and 81 to 83; these read AVE and AVI. 86–87 contributes to the (2S)-2-hydroxy-3-oxobutyl phosphate binding site; sequence GT. The active-site Proton donor is the His-89. Position 114 (Phe-114) interacts with 5-amino-6-(D-ribitylamino)uracil. A (2S)-2-hydroxy-3-oxobutyl phosphate-binding site is contributed by Arg-128.

Belongs to the DMRL synthase family. In terms of assembly, forms an icosahedral capsid composed of 60 subunits, arranged as a dodecamer of pentamers.

The catalysed reaction is (2S)-2-hydroxy-3-oxobutyl phosphate + 5-amino-6-(D-ribitylamino)uracil = 6,7-dimethyl-8-(1-D-ribityl)lumazine + phosphate + 2 H2O + H(+). It participates in cofactor biosynthesis; riboflavin biosynthesis; riboflavin from 2-hydroxy-3-oxobutyl phosphate and 5-amino-6-(D-ribitylamino)uracil: step 1/2. Catalyzes the formation of 6,7-dimethyl-8-ribityllumazine by condensation of 5-amino-6-(D-ribitylamino)uracil with 3,4-dihydroxy-2-butanone 4-phosphate. This is the penultimate step in the biosynthesis of riboflavin. This chain is 6,7-dimethyl-8-ribityllumazine synthase, found in Shewanella frigidimarina (strain NCIMB 400).